A 735-amino-acid polypeptide reads, in one-letter code: Transcription factor RFX4 (735 aa).

Residues S25–P59 are disordered. A DNA-binding region spans residues N44 to K126. The RFX-type winged-helix DNA-binding region spans T61–E136. The necessary for dimerization stretch occupies residues R315–E487.

It belongs to the RFX family.

The protein localises to the nucleus. May activate transcription by interacting directly with the X-box. The protein is Transcription factor RFX4 (rfx4) of Danio rerio (Zebrafish).